A 166-amino-acid chain; its full sequence is Small ribosomal subunit protein uS5 (166 aa).

An S5 DRBM domain is found at 11–74; sequence LQEKLIAVNR…EKARRNMITV (64 aa).

It belongs to the universal ribosomal protein uS5 family. In terms of assembly, part of the 30S ribosomal subunit. Contacts proteins S4 and S8.

Its function is as follows. With S4 and S12 plays an important role in translational accuracy. In terms of biological role, located at the back of the 30S subunit body where it stabilizes the conformation of the head with respect to the body. This chain is Small ribosomal subunit protein uS5, found in Histophilus somni (strain 2336) (Haemophilus somnus).